A 275-amino-acid chain; its full sequence is Dermonecrotic toxin SpeSicTox-betaIIA3ii (275 aa).

Histidine 5 is an active-site residue. Mg(2+)-binding residues include glutamate 25 and aspartate 27. The active-site Nucleophile is the histidine 41. 2 cysteine pairs are disulfide-bonded: cysteine 45–cysteine 51 and cysteine 47–cysteine 190. Residue aspartate 85 coordinates Mg(2+).

It belongs to the arthropod phospholipase D family. Class II subfamily. The cofactor is Mg(2+). Expressed by the venom gland.

It localises to the secreted. It carries out the reaction an N-(acyl)-sphingosylphosphocholine = an N-(acyl)-sphingosyl-1,3-cyclic phosphate + choline. The catalysed reaction is an N-(acyl)-sphingosylphosphoethanolamine = an N-(acyl)-sphingosyl-1,3-cyclic phosphate + ethanolamine. The enzyme catalyses a 1-acyl-sn-glycero-3-phosphocholine = a 1-acyl-sn-glycero-2,3-cyclic phosphate + choline. It catalyses the reaction a 1-acyl-sn-glycero-3-phosphoethanolamine = a 1-acyl-sn-glycero-2,3-cyclic phosphate + ethanolamine. Dermonecrotic toxins cleave the phosphodiester linkage between the phosphate and headgroup of certain phospholipids (sphingolipid and lysolipid substrates), forming an alcohol (often choline) and a cyclic phosphate. This toxin acts on sphingomyelin (SM). It may also act on ceramide phosphoethanolamine (CPE), lysophosphatidylcholine (LPC) and lysophosphatidylethanolamine (LPE), but not on lysophosphatidylserine (LPS), and lysophosphatidylglycerol (LPG). It acts by transphosphatidylation, releasing exclusively cyclic phosphate products as second products. Induces dermonecrosis, hemolysis, increased vascular permeability, edema, inflammatory response, and platelet aggregation. In Sicarius peruensis (Six-eyed sand spider), this protein is Dermonecrotic toxin SpeSicTox-betaIIA3ii.